The primary structure comprises 938 residues: Protein NLP3 (938 aa).

Disordered regions lie at residues M1–D26 and L557–K597. Over residues A12 to D26 the composition is skewed to gly residues. Residues S580–K597 show a composition bias toward basic and acidic residues. The RWP-RK domain occupies N585 to A666. A coiled-coil region spans residues S640–G662. The disordered stretch occupies residues D743–S769. Positions S748 to S762 are enriched in low complexity. Residues T847 to V926 enclose the PB1 domain.

The protein resides in the nucleus. Probable transcription factor. This chain is Protein NLP3 (NLP3), found in Oryza sativa subsp. japonica (Rice).